The chain runs to 93 residues: uncharacterized protein (93 aa).

The next 2 helical transmembrane spans lie at 7-27 and 70-90; these read LIFL…LGMI and ILSV…AFGI.

Its subcellular location is the cell membrane. This is an uncharacterized protein from Methanocaldococcus jannaschii (strain ATCC 43067 / DSM 2661 / JAL-1 / JCM 10045 / NBRC 100440) (Methanococcus jannaschii).